Here is a 1733-residue protein sequence, read N- to C-terminus: Protein NETWORKED 1D (1733 aa).

The 81-residue stretch at Tyr12–Ile92 folds into the NAB domain. Coiled coils occupy residues Lys195–Ser816, Leu897–Ser931, Asp960–Ile1043, and Ala1196–Met1386. Positions Leu1456 to His1476 are disordered. A compositionally biased stretch (basic residues) spans Ser1460–Ser1470. 2 coiled-coil regions span residues Ala1553–Asn1627 and Ser1653–Asp1686. The interval Gly1628–Ala1656 is disordered.

This sequence belongs to the NET family.

In terms of biological role, plant-specific actin binding protein. May be part of a membrane-cytoskeletal adapter complex. This is Protein NETWORKED 1D from Arabidopsis thaliana (Mouse-ear cress).